Here is a 367-residue protein sequence, read N- to C-terminus: Flagellar P-ring protein (367 aa).

An N-terminal signal peptide occupies residues 1-21 (MYVFKALAGIVLALVATLAHA).

It belongs to the FlgI family. As to quaternary structure, the basal body constitutes a major portion of the flagellar organelle and consists of four rings (L,P,S, and M) mounted on a central rod.

The protein resides in the periplasm. It localises to the bacterial flagellum basal body. Functionally, assembles around the rod to form the L-ring and probably protects the motor/basal body from shearing forces during rotation. The polypeptide is Flagellar P-ring protein (Salmonella choleraesuis (strain SC-B67)).